We begin with the raw amino-acid sequence, 184 residues long: Ribosome-recycling factor (184 aa).

The protein belongs to the RRF family.

It is found in the cytoplasm. Functionally, responsible for the release of ribosomes from messenger RNA at the termination of protein biosynthesis. May increase the efficiency of translation by recycling ribosomes from one round of translation to another. This chain is Ribosome-recycling factor, found in Aster yellows witches'-broom phytoplasma (strain AYWB).